The primary structure comprises 429 residues: Aspartate--tRNA(Asp/Asn) ligase (429 aa).

Glu-166 is an L-aspartate binding site. The tract at residues 188–191 is aspartate; that stretch reads QLYK. Arg-210 provides a ligand contact to L-aspartate. ATP contacts are provided by residues 210 to 212, 218 to 220, and Glu-352; these read RAE and RHL. 2 residues coordinate Mg(2+): Glu-352 and Ser-355. Ser-355 and Arg-359 together coordinate L-aspartate. 400–403 contributes to the ATP binding site; it reads GAER.

This sequence belongs to the class-II aminoacyl-tRNA synthetase family. Type 2 subfamily. As to quaternary structure, homodimer. The cofactor is Mg(2+).

It localises to the cytoplasm. The enzyme catalyses tRNA(Asx) + L-aspartate + ATP = L-aspartyl-tRNA(Asx) + AMP + diphosphate. Functionally, aspartyl-tRNA synthetase with relaxed tRNA specificity since it is able to aspartylate not only its cognate tRNA(Asp) but also tRNA(Asn). Reaction proceeds in two steps: L-aspartate is first activated by ATP to form Asp-AMP and then transferred to the acceptor end of tRNA(Asp/Asn). In Methanocorpusculum labreanum (strain ATCC 43576 / DSM 4855 / Z), this protein is Aspartate--tRNA(Asp/Asn) ligase.